Here is a 509-residue protein sequence, read N- to C-terminus: GMP synthase [glutamine-hydrolyzing] (509 aa).

One can recognise a Glutamine amidotransferase type-1 domain in the interval N4–N193. C79 functions as the Nucleophile in the catalytic mechanism. Residues H167 and E169 contribute to the active site. Positions F194 to R384 constitute a GMPS ATP-PPase domain. S221 to T227 contributes to the ATP binding site.

In terms of assembly, homodimer.

It catalyses the reaction XMP + L-glutamine + ATP + H2O = GMP + L-glutamate + AMP + diphosphate + 2 H(+). Its pathway is purine metabolism; GMP biosynthesis; GMP from XMP (L-Gln route): step 1/1. Functionally, catalyzes the synthesis of GMP from XMP. In Flavobacterium psychrophilum (strain ATCC 49511 / DSM 21280 / CIP 103535 / JIP02/86), this protein is GMP synthase [glutamine-hydrolyzing].